The chain runs to 491 residues: Ketol-acid reductoisomerase (NADP(+)) (491 aa).

The KARI N-terminal Rossmann domain occupies 15–208 (AQLGKCRFMG…GGHRAGVLES (194 aa)). Residues 45–48 (CGAQ), R68, R76, S78, and 108–110 (DKQ) each bind NADP(+). H132 is an active-site residue. G158 contacts NADP(+). KARI C-terminal knotted domains lie at 209–344 (SFVA…TAPQ) and 345–484 (YEGK…MTDM). Residues D217, E221, E389, and E393 each coordinate Mg(2+). Residue S414 participates in substrate binding.

Belongs to the ketol-acid reductoisomerase family. Mg(2+) serves as cofactor.

It catalyses the reaction (2R)-2,3-dihydroxy-3-methylbutanoate + NADP(+) = (2S)-2-acetolactate + NADPH + H(+). The enzyme catalyses (2R,3R)-2,3-dihydroxy-3-methylpentanoate + NADP(+) = (S)-2-ethyl-2-hydroxy-3-oxobutanoate + NADPH + H(+). It functions in the pathway amino-acid biosynthesis; L-isoleucine biosynthesis; L-isoleucine from 2-oxobutanoate: step 2/4. Its pathway is amino-acid biosynthesis; L-valine biosynthesis; L-valine from pyruvate: step 2/4. Involved in the biosynthesis of branched-chain amino acids (BCAA). Catalyzes an alkyl-migration followed by a ketol-acid reduction of (S)-2-acetolactate (S2AL) to yield (R)-2,3-dihydroxy-isovalerate. In the isomerase reaction, S2AL is rearranged via a Mg-dependent methyl migration to produce 3-hydroxy-3-methyl-2-ketobutyrate (HMKB). In the reductase reaction, this 2-ketoacid undergoes a metal-dependent reduction by NADPH to yield (R)-2,3-dihydroxy-isovalerate. The sequence is that of Ketol-acid reductoisomerase (NADP(+)) from Escherichia coli O7:K1 (strain IAI39 / ExPEC).